Reading from the N-terminus, the 510-residue chain is NAD(P)H-quinone oxidoreductase subunit 2, chloroplastic (510 aa).

The next 12 membrane-spanning stretches (helical) occupy residues 24–44, 59–79, 99–119, 124–144, 149–169, 183–203, 229–249, 295–315, 323–343, 354–374, 395–415, and 418–438; these read LLLF…GLIL, WFYF…LFRW, IFQF…VEYI, MAIT…MFLC, LITI…LSGY, YLLM…WLYG, ISIA…PAPF, WHLL…LIAI, MLAY…IVGD, YMLF…LFGL, ALSS…AGFF, and LHLF…IGLL.

Belongs to the complex I subunit 2 family. In terms of assembly, NDH is composed of at least 16 different subunits, 5 of which are encoded in the nucleus.

It is found in the plastid. Its subcellular location is the chloroplast thylakoid membrane. The catalysed reaction is a plastoquinone + NADH + (n+1) H(+)(in) = a plastoquinol + NAD(+) + n H(+)(out). The enzyme catalyses a plastoquinone + NADPH + (n+1) H(+)(in) = a plastoquinol + NADP(+) + n H(+)(out). In terms of biological role, NDH shuttles electrons from NAD(P)H:plastoquinone, via FMN and iron-sulfur (Fe-S) centers, to quinones in the photosynthetic chain and possibly in a chloroplast respiratory chain. The immediate electron acceptor for the enzyme in this species is believed to be plastoquinone. Couples the redox reaction to proton translocation, and thus conserves the redox energy in a proton gradient. In Ensete ventricosum (Abyssinian banana), this protein is NAD(P)H-quinone oxidoreductase subunit 2, chloroplastic.